A 547-amino-acid polypeptide reads, in one-letter code: Undecaprenyl phosphate-alpha-4-amino-4-deoxy-L-arabinose arabinosyl transferase (547 aa).

11 helical membrane-spanning segments follow: residues 1-21 (MKLT…LPLD), 83-103 (FASA…ALQL), 111-131 (FLAG…TYSV), 174-194 (FLTK…PYVI), 205-225 (FGPL…IAVH), 253-273 (APFW…LGLL), 286-306 (ISPE…FFSV), 311-331 (LLTY…ASAV), 346-366 (AWLN…LALS), 378-398 (GALA…FIQL), and 408-428 (SALC…QSLI).

The protein belongs to the glycosyltransferase 83 family.

The protein localises to the cell inner membrane. The enzyme catalyses 4-amino-4-deoxy-alpha-L-arabinopyranosyl di-trans,octa-cis-undecaprenyl phosphate + lipid IVA = lipid IIA + di-trans,octa-cis-undecaprenyl phosphate.. Its pathway is lipopolysaccharide metabolism; 4-amino-4-deoxy-beta-L-arabinose-lipid A biosynthesis. Catalyzes the transfer of the L-Ara4N moiety of the glycolipid undecaprenyl phosphate-alpha-L-Ara4N to lipid A. The modified arabinose is attached to lipid A and is required for resistance to polymyxin and cationic antimicrobial peptides. The chain is Undecaprenyl phosphate-alpha-4-amino-4-deoxy-L-arabinose arabinosyl transferase from Aeromonas salmonicida (strain A449).